The sequence spans 345 residues: UDP-N-acetylenolpyruvoylglucosamine reductase (345 aa).

Positions 16-186 (LPAYASNVIS…VSVGIKLMKS (171 aa)) constitute an FAD-binding PCMH-type domain. Arg162 is a catalytic residue. The active-site Proton donor is Ser232. The active site involves Glu328.

This sequence belongs to the MurB family. FAD is required as a cofactor.

Its subcellular location is the cytoplasm. The catalysed reaction is UDP-N-acetyl-alpha-D-muramate + NADP(+) = UDP-N-acetyl-3-O-(1-carboxyvinyl)-alpha-D-glucosamine + NADPH + H(+). It participates in cell wall biogenesis; peptidoglycan biosynthesis. Cell wall formation. In Yersinia pestis, this protein is UDP-N-acetylenolpyruvoylglucosamine reductase.